An 84-amino-acid chain; its full sequence is Large ribosomal subunit protein bL27 (84 aa).

Positions 1-24 (MAHKKGAASTKNGRDSNSQRLGVK) are disordered. Polar residues predominate over residues 9–20 (STKNGRDSNSQR).

This sequence belongs to the bacterial ribosomal protein bL27 family.

In Nocardioides sp. (strain ATCC BAA-499 / JS614), this protein is Large ribosomal subunit protein bL27.